We begin with the raw amino-acid sequence, 577 residues long: External alternative NAD(P)H-ubiquinone oxidoreductase B1, mitochondrial (577 aa).

Residues 1–35 (MRGFTYLSKVLHSHSSYSKLLVLCSVSTGGLLVYA) constitute a mitochondrion transit peptide. Position 57–87 (57–87 (RVVVLGTGWGGTSFLKDVDISSYDVQVVSPR)) interacts with FAD. Position 221–257 (221–257 (LHFVIVGGGPTGVEFAAELHDYVYEDLVKIYPSVKDF)) interacts with NAD(+). One can recognise an EF-hand domain in the interval 378–413 (KVMEDISAIFKAADKDDSGTLSIEEFRDVLEDIIIR). 5 residues coordinate Ca(2+): Asp391, Asp393, Ser395, Thr397, and Glu402. Residues 568–577 (YIFGRDSSRI) carry the Microbody targeting signal motif.

It belongs to the NADH dehydrogenase family. Requires FAD as cofactor.

It localises to the mitochondrion inner membrane. The protein localises to the peroxisome. It catalyses the reaction a quinone + NADH + H(+) = a quinol + NAD(+). It carries out the reaction a ubiquinone + NADH + H(+) = a ubiquinol + NAD(+). Its activity is regulated as follows. Activity is calcium-dependent with a more pronounced effect at higher pH. Alternative NADH-ubiquinone oxidoreductase which catalyzes the oxidation of mitochondrial NADH does not translocate protons across the inner mitochondrial membrane. Calcium-dependent NAD(P)H dehydrogenase. Binds calcium ions. This is External alternative NAD(P)H-ubiquinone oxidoreductase B1, mitochondrial (NDB1) from Solanum tuberosum (Potato).